Here is a 410-residue protein sequence, read N- to C-terminus: Phosphoglycerate kinase (410 aa).

Residues 19–21 (DLN), arginine 34, 57–60 (HQGK), arginine 114, and arginine 154 each bind substrate. ATP contacts are provided by residues glutamate 332 and 358–361 (GGHS).

It belongs to the phosphoglycerate kinase family. As to quaternary structure, homodimer.

The protein resides in the cytoplasm. It catalyses the reaction (2R)-3-phosphoglycerate + ATP = (2R)-3-phospho-glyceroyl phosphate + ADP. It functions in the pathway carbohydrate degradation; glycolysis; pyruvate from D-glyceraldehyde 3-phosphate: step 2/5. The sequence is that of Phosphoglycerate kinase (pgk) from Pyrococcus horikoshii (strain ATCC 700860 / DSM 12428 / JCM 9974 / NBRC 100139 / OT-3).